Consider the following 452-residue polypeptide: Gamma-aminobutyric acid receptor subunit delta (452 aa).

Residues 1–24 (MDAPARLLAPLLLLCAQQLRGTRA) form the signal peptide. Residues 25–251 (MNDIGDYVGS…HLRRNRGVYI (227 aa)) lie on the Extracellular side of the membrane. 2 N-linked (GlcNAc...) asparagine glycosylation sites follow: N103 and N106. A disulfide bridge links C164 with C178. Residues 252 to 271 (IQSYMPSVLLVAMSWVSFWI) traverse the membrane as a helical segment. The Cytoplasmic portion of the chain corresponds to 272–275 (SQAA). The chain crosses the membrane as a helical span at residues 276–298 (VPARVSLGITTVLTMTTLMVSAR). The Extracellular portion of the chain corresponds to 299–308 (SSLPRASAIK). Residues 309–331 (ALDVYFWICYVFVFAALVEYAFA) traverse the membrane as a helical segment. Over 332–426 (HFNADYRKKQ…ARLRPIDADT (95 aa)) the chain is Cytoplasmic. S390 bears the Phosphoserine mark. A helical membrane pass occupies residues 427 to 449 (IDIYARAVFPAAFAAVNVIYWAA). Topologically, residues 450-452 (YAM) are extracellular.

Belongs to the ligand-gated ion channel (TC 1.A.9) family. Gamma-aminobutyric acid receptor (TC 1.A.9.5) subfamily. GABRD sub-subfamily. As to quaternary structure, heteropentamer, formed by a combination of alpha (GABRA1-6), beta (GABRB1-3), gamma (GABRG1-3), delta (GABRD), epsilon (GABRE), rho (GABRR1-3), pi (GABRP) and theta (GABRQ) chains, each subunit exhibiting distinct physiological and pharmacological properties.

Its subcellular location is the cell membrane. The catalysed reaction is chloride(in) = chloride(out). Its function is as follows. Delta subunit of the heteropentameric ligand-gated chloride channel gated by gamma-aminobutyric acid (GABA), a major inhibitory neurotransmitter in the brain. GABA-gated chloride channels, also named GABA(A) receptors (GABAAR), consist of five subunits arranged around a central pore and contain GABA active binding site(s) located at the alpha and beta subunit interface(s). When activated by GABA, GABAARs selectively allow the flow of chloride anions across the cell membrane down their electrochemical gradient. GABAARs containing delta/GABRD subunits are predominantly located in extrasynaptic or perisynaptic positions on hippocampus and cerebellar granule cells, and contribute to the tonic GABAergic inhibition. GABAAR containing alpha-4-beta-3-delta subunits can simultaneously bind GABA and histamine where histamine binds at the interface of two neighboring beta subunits, which may be involved in the regulation of sleep and wakefulness. This chain is Gamma-aminobutyric acid receptor subunit delta, found in Homo sapiens (Human).